The primary structure comprises 970 residues: Protein bicaudal C homolog 1-B (970 aa).

The segment at Met1–Arg50 is disordered. Polar residues predominate over residues Met9 to Glu19. The segment covering His40–Arg50 has biased composition (basic and acidic residues). 2 consecutive KH domains span residues Arg130–Ile197 and Pro282–Leu346. The span at Glu596–Ser605 shows a compositional bias: polar residues. 3 disordered regions span residues Glu596–Thr638, Ser677–Ser696, and Arg773–Ala841. Residues Ser606–Ser616 show a composition bias toward basic and acidic residues. 2 stretches are compositionally biased toward polar residues: residues Thr783 to Ser810 and Ile819 to Gly831. Residues Phe869 to Asn932 form the SAM domain.

Belongs to the BicC family.

Its function is as follows. Putative RNA-binding protein. May be involved in regulating gene expression during embryonic development. Seems to be involved in endoderm formation. Ectopic expression results in endoderm formation in the absence of mesoderm induction. This chain is Protein bicaudal C homolog 1-B (bicc1-b), found in Xenopus laevis (African clawed frog).